The sequence spans 389 residues: Trans-2-enoyl-CoA reductase [NADH] (389 aa).

NAD(+) is bound by residues Gly-47 to Tyr-52, Phe-73 to Glu-74, Asp-110 to Ala-111, and Leu-138 to Ala-139. Residue Tyr-224 coordinates substrate. Catalysis depends on Tyr-234, which acts as the Proton donor. Residues Lys-243 and Leu-272–Thr-274 contribute to the NAD(+) site.

Belongs to the TER reductase family. In terms of assembly, monomer.

The enzyme catalyses a 2,3-saturated acyl-CoA + NAD(+) = a (2E)-enoyl-CoA + NADH + H(+). It functions in the pathway lipid metabolism; fatty acid biosynthesis. Involved in the fatty acid synthesis (FAS II). Catalyzes the reduction of a carbon-carbon double bond in an enoyl moiety that is covalently linked to a coenzyme A (CoA). The polypeptide is Trans-2-enoyl-CoA reductase [NADH] (Clostridium perfringens (strain 13 / Type A)).